Reading from the N-terminus, the 370-residue chain is Aminomethyltransferase (370 aa).

Belongs to the GcvT family. The glycine cleavage system is composed of four proteins: P, T, L and H.

The catalysed reaction is N(6)-[(R)-S(8)-aminomethyldihydrolipoyl]-L-lysyl-[protein] + (6S)-5,6,7,8-tetrahydrofolate = N(6)-[(R)-dihydrolipoyl]-L-lysyl-[protein] + (6R)-5,10-methylene-5,6,7,8-tetrahydrofolate + NH4(+). Its function is as follows. The glycine cleavage system catalyzes the degradation of glycine. The sequence is that of Aminomethyltransferase from Stenotrophomonas maltophilia (strain R551-3).